Reading from the N-terminus, the 872-residue chain is F-box protein pof6 (872 aa).

In terms of domain architecture, F-box spans 30–75; sequence FGCLTINIYLKIFTLISTPDLCNCRLVCRKFQQLCDYNSIYVKKLL. Residues 101 to 122 are disordered; the sequence is MSSNTSKGFHLQSSDKKYADSD. The span at 113 to 122 shows a compositional bias: basic and acidic residues; the sequence is SSDKKYADSD.

As to quaternary structure, interacts with skp1. Forms a complex with pof6 and skp1.

Its subcellular location is the cytoplasm. The protein resides in the nucleus. Together with skp1, essential for septum processing and cell separation. The chain is F-box protein pof6 (pof6) from Schizosaccharomyces pombe (strain 972 / ATCC 24843) (Fission yeast).